A 140-amino-acid polypeptide reads, in one-letter code: Small ribosomal subunit protein eS17x (140 aa).

Belongs to the eukaryotic ribosomal protein eS17 family.

This is Small ribosomal subunit protein eS17x (RPS17C) from Arabidopsis thaliana (Mouse-ear cress).